Reading from the N-terminus, the 354-residue chain is S-adenosylmethionine:tRNA ribosyltransferase-isomerase (354 aa).

Belongs to the QueA family. In terms of assembly, monomer.

The protein localises to the cytoplasm. The catalysed reaction is 7-aminomethyl-7-carbaguanosine(34) in tRNA + S-adenosyl-L-methionine = epoxyqueuosine(34) in tRNA + adenine + L-methionine + 2 H(+). The protein operates within tRNA modification; tRNA-queuosine biosynthesis. Transfers and isomerizes the ribose moiety from AdoMet to the 7-aminomethyl group of 7-deazaguanine (preQ1-tRNA) to give epoxyqueuosine (oQ-tRNA). In Salmonella paratyphi A (strain ATCC 9150 / SARB42), this protein is S-adenosylmethionine:tRNA ribosyltransferase-isomerase.